We begin with the raw amino-acid sequence, 314 residues long: Olfactory receptor 5P66 (314 aa).

Residues 1–28 (MAFLENGNHTAVSEFILLGLTDDPVLRI) lie on the Extracellular side of the membrane. An N-linked (GlcNAc...) asparagine glycan is attached at Asn8. The helical transmembrane segment at 29 to 49 (VLFTIILCIYLVTVSGNLSTI) threads the bilayer. The Cytoplasmic segment spans residues 50-57 (LLIRVSSQ). The chain crosses the membrane as a helical span at residues 58 to 78 (LHHPMYFFLSHLASADIGLSS). Over 79-102 (SVTPNMLVNFLVERSTISYLGCGI) the chain is Extracellular. A disulfide bridge links Cys100 with Cys192. Residues 103–123 (QLSSAALFGATECFLLAAMAY) form a helical membrane-spanning segment. Topologically, residues 124–136 (DRFMAICNPLLYS) are cytoplasmic. The chain crosses the membrane as a helical span at residues 137 to 157 (TKMSTKVCVQLIVGSYIAGFL). The Extracellular segment spans residues 158-199 (NASSFLLSFFSLLFCGQNIINDFFCDFAPLAELSCSDVSVFV). The chain crosses the membrane as a helical span at residues 200–220 (VVISFSAGTVTMLTVFVIAIS). At 221 to 240 (YSYILITILKMRSTEGRQKA) the chain is on the cytoplasmic side. The helical transmembrane segment at 241-261 (FSTCTSHLTAVTLFYGTVTFI) threads the bilayer. The Extracellular segment spans residues 262 to 274 (YVMPKSSYSMDQN). The chain crosses the membrane as a helical span at residues 275–295 (KIISVFYMVVVPMLNPLIYSL). At 296–314 (RNNEIKGALKRHFDRKTFS) the chain is on the cytoplasmic side.

It belongs to the G-protein coupled receptor 1 family.

It is found in the cell membrane. Functionally, potential odorant receptor. This chain is Olfactory receptor 5P66, found in Mus musculus (Mouse).